Here is a 1778-residue protein sequence, read N- to C-terminus: Ankyrin repeat domain-containing protein 36C (1778 aa).

ANK repeat units lie at residues 64–93 (KERTALHLACATGQPEMVHLLVSRRCELNL), 97–126 (EDRTPLIKAVQLRQEACATLLLQNGADPNI), 130–159 (FGRTALHYAVYNEDTSMIEKLLSYGANIEE), 163–192 (DEYPPLFLAVSQRKVKMVEFLLKKKANINA), and 196–225 (LGRSALIHAVTLGEKDIVILLLQHNIDVFS). Disordered regions lie at residues 260–365 (LSIN…DEQK), 501–526 (ALPATGQKANVSPEQPPLFTHTVKDS), 538–653 (DSLT…QKQS), 671–1027 (RITG…QKQL), and 1051–1072 (IRGTVSSQRQPALKATGDEKDS). Polar residues-rich tracts occupy residues 261-272 (SINSNPVSSQKQ) and 297-306 (KSGTVSSQKQ). A compositionally biased stretch (low complexity) spans 539–555 (SLTSSEESSERPPLSTL). Composition is skewed to basic and acidic residues over residues 585–596 (PAEKATSDDKDS) and 619–630 (PAEKATSDEKDS). Polar residues-rich tracts occupy residues 631–653 (VSNIATEIKEGQQSGTVSPQKQS) and 679–691 (GTVSSQKQPPSKA). Basic and acidic residues predominate over residues 794 to 813 (TSDEKDSFSNITREKKDGEI). Serine 829 bears the Phosphoserine mark. 2 stretches are compositionally biased toward basic and acidic residues: residues 840 to 849 (RGKEDGEKTR) and 862 to 881 (TSDEKDSFSNITREKKDGET). The residue at position 897 (serine 897) is a Phosphoserine. The span at 907-917 (AREKKDGEKSR) shows a compositional bias: basic and acidic residues. The span at 942–955 (RGKKHGEKTRRVSS) shows a compositional bias: basic residues. 2 stretches are compositionally biased toward polar residues: residues 983–992 (ISGTVSSQKQ) and 1005–1026 (VSNIPTEIKDGQQSGTVSSQKQ). Coiled coils occupy residues 1157–1187 (EQDLEMASEGEQKRLEEYENNQPQVKNQIHS), 1247–1333 (ELKD…YRIE), 1362–1480 (SETD…DHDQ), and 1544–1768 (VFEH…ILQH).

It belongs to the ANKRD36 family.

This is Ankyrin repeat domain-containing protein 36C (ANKRD36C) from Homo sapiens (Human).